The sequence spans 887 residues: Alanine--tRNA ligase (887 aa).

Positions 581, 585, 683, and 687 each coordinate Zn(2+).

It belongs to the class-II aminoacyl-tRNA synthetase family. It depends on Zn(2+) as a cofactor.

It localises to the cytoplasm. It carries out the reaction tRNA(Ala) + L-alanine + ATP = L-alanyl-tRNA(Ala) + AMP + diphosphate. Catalyzes the attachment of alanine to tRNA(Ala) in a two-step reaction: alanine is first activated by ATP to form Ala-AMP and then transferred to the acceptor end of tRNA(Ala). Also edits incorrectly charged Ser-tRNA(Ala) and Gly-tRNA(Ala) via its editing domain. The protein is Alanine--tRNA ligase of Ehrlichia canis (strain Jake).